We begin with the raw amino-acid sequence, 2799 residues long: MTSIHFVVHPLPGTEDQLNDRLREVSEKLNKYNLNSHPPLNVLEQATIKQCVVGPNHAAFLLEDGRVCRIGFSVQPDRLELGKPDNNDGSKLNSNSGAGRTSRPGRTSDSPWFLSGSETLGRLAGNTLGSRWSSGVGGSGGGSSGRSSAGARDSRRQTRVIRTGRDRGSGLLGSQPQPVIPASVIPEELISQAQVVLQGKSRSVIIRELQRTNLDVNLAVNNLLSRDDEDGDDGDDTASESYLPGEDLMSLLDADIHSAHPSVIIDADAMFSEDISYFGYPSFRRSSLSRLGSSRVLLLPLERDSELLRERESVLRLRERRWLDGASFDNERGSTSKEGEPNLDKKNTPVQSPVSLGEDLQWWPDKDGTKFICIGALYSELLAVSSKGELYQWKWSESEPYRNAQNPSLHHPRATFLGLTNEKIVLLSANSIRATVATENNKVATWVDETLSSVASKLEHTAQTYSELQGERIVSLHCCALYTCAQLENSLYWWGVVPFSQRKKMLEKARAKNKKPKSSAGISSMPNITVGTQVCLRNNPLYHAGAVAFSISAGIPKVGVLMESVWNMNDSCRFQLRSPESLKNMEKASKTTEAKPESKQEPVKTEMGPPPSPASTCSDASSIASSASMPYKRRRSTPAPKEEEKVNEEQWSLREVVFVEDVKNVPVGKVLKVDGAYVAVKFPGTSSNTNCQNSSGPDADPSSLLQDCRLLRIDELQVVKTGGTPKVPDCFQRTPKKLCIPEKTEILAVNVDSKGVHAVLKTGNWVRYCIFDLATGKAEQENNFPTSSIAFLGQNERNVAIFTAGQESPIILRDGNGTIYPMAKDCMGGIRDPDWLDLPPISSLGMGVHSLINLPANSTIKKKAAVIIMAVEKQTLMQHILRCDYEACRQYLMNLEQAVVLEQNLQMLQTFISHRCDGNRNILHACVSVCFPTSNKETKEEEEAERSERNTFAERLSAVEAIANAISVVSSNGPGNRAGSSSSRSLRLREMMRRSLRAAGLGRHEAGASSSDHQDPVSPPIAPPSWVPDPPAMDPDGDIDFILAPAVGSLTTAATGTGQGPSTSTIPGPSTEPSVVESKDRKANAHFILKLLCDSVVLQPYLRELLSAKDARGMTPFMSAVSGRAYPAAITILETAQKIAKAEISSSEKEEDVFMGMVCPSGTNPDDSPLYVLCCNDTCSFTWTGAEHINQDIFECRTCGLLESLCCCTECARVCHKGHDCKLKRTSPTAYCDCWEKCKCKTLIAGQKSARLDLLYRLLTATNLVTLPNSRGEHLLLFLVQTVARQTVEHCQYRPPRIREDRNRKTASPEDSDMPDHDLEPPRFAQLALERVLQDWNALKSMIMFGSQENKDPLSASSRIGHLLPEEQVYLNQQSGTIRLDCFTHCLIVKCTADILLLDTLLGTLVKELQNKYTPGRREEAIAVTMRFLRSVARVFVILSVEMASSKKKNNFIPQPIGKCKRVFQALLPYAVEELCNVAESLIVPVRMGIARPTAPFTLASTSIDAMQGSEELFSVEPLPPRPSSDQSSSSSQSQSSYIIRNPQQRRISQSQPVRGRDEEQDDIVSADVEEVEVVEGVAGEEDHHDEQEEHGEENAEAEGQHDEHDEDGSDMELDLLAAAETESDSESNHSNQDNASGRRSVVTAATAGSEAGASSVPAFFSEDDSQSNDSSDSDSSSSQSDDIEQETFMLDEPLERTTNSSHANGAAQAPRSMQWAVRNTQHQRAASTAPSSTSTPAASSAGLIYIDPSNLRRSGTISTSAAAAAAALEASNASSYLTSASSLARAYSIVIRQISDLMGLIPKYNHLVYSQIPAAVKLTYQDAVNLQNYVEEKLIPTWNWMVSIMDSTEAQLRYGSALASAGDPGHPNHPLHASQNSARRERMTAREEASLRTLEGRRRATLLSARQGMMSARGDFLNYALSLMRSHNDEHSDVLPVLDVCSLKHVAYVFQALIYWIKAMNQQTTLDTPQLERKRTRELLELGIDNEDSEHENDDDTNQSATLNDKDDDSLPAETGQNHPFFRRSDSMTFLGCIPPNPFEVPLAEAIPLADQPHLLQPNARKEDLFGRPSQGLYSSSASSGKCLMEVTVDRNCLEVLPTKMSYAANLKNVMNMQNRQKKEGEEQPVLPEETESSKPGPSAHDLAAQLKSSLLAEIGLTESEGPPLTSFRPQCSFMGMVISHDMLLGRWRLSLELFGRVFMEDVGAEPGSILTELGGFEVKESKFRREMEKLRNQQSRDLSLEVDRDRDLLIQQTMRQLNNHFGRRCATTPMAVHRVKVTFKDEPGEGSGVARSFYTAIAQAFLSNEKLPNLECIQNANKGTHTSLMQRLRNRGERDREREREREMRRSSGLRAGSRRDRDRDFRRQLSIDTRPFRPASEGNPSDDPEPLPAHRQALGERLYPRVQAMQPAFASKITGMLLELSPAQLLLLLASEDSLRARVDEAMELIIAHGRENGADSILDLGLVDSSEKVQQENRKRHGSSRSVVDMDLDDTDDGDDNAPLFYQPGKRGFYTPRPGKNTEARLNCFRNIGRILGLCLLQNELCPITLNRHVIKVLLGRKVNWHDFAFFDPVMYESLRQLILASQSSDADAVFSAMDLAFAIDLCKEEGGGQVELIPNGVNIPVTPQNVYEYVRKYAEHRMLVVAEQPLHAMRKGLLDVLPKNSLEDLTAEDFRLLVNGCGEVNVQMLISFTSFNDESGENAEKLLQFKRWFWSIVEKMSMTERQDLVYFWTSSPSLPASEEGFQPMPSITIRPPDDQHLPTANTCISRLYVPLYSSKQILKQKLLLAIKTKNFGFV.

Threonine 2 is subject to N-acetylthreonine. Positions 77 to 88 (DRLELGKPDNND) are enriched in basic and acidic residues. The disordered stretch occupies residues 77-175 (DRLELGKPDN…DRGSGLLGSQ (99 aa)). A compositionally biased stretch (polar residues) spans 89–110 (GSKLNSNSGAGRTSRPGRTSDS). Serine 110 is modified (phosphoserine). A compositionally biased stretch (gly residues) spans 135 to 144 (GVGGSGGGSS). The region spanning 184-226 (VIPEELISQAQVVLQGKSRSVIIRELQRTNLDVNLAVNNLLSR) is the UBA domain. Position 327 is a phosphoserine (serine 327). The span at 328–347 (FDNERGSTSKEGEPNLDKKN) shows a compositional bias: basic and acidic residues. Residues 328–352 (FDNERGSTSKEGEPNLDKKNTPVQS) form a disordered region. Serine 352 and serine 578 each carry phosphoserine. The interval 579 to 648 (PESLKNMEKA…APKEEEKVNE (70 aa)) is disordered. The segment covering 583–604 (KNMEKASKTTEAKPESKQEPVK) has biased composition (basic and acidic residues). Phosphoserine is present on serine 612. A compositionally biased stretch (low complexity) spans 614–628 (ASTCSDASSIASSAS). Threonine 637 carries the post-translational modification Phosphothreonine. Phosphoserine occurs at positions 808, 928, and 1018. 2 disordered regions span residues 999–1031 (AGLG…PDPP) and 1052–1075 (TAAT…EPSV). Positions 1017-1031 (VSPPIAPPSWVPDPP) are enriched in pro residues. Residues 1052–1073 (TAATGTGQGPSTSTIPGPSTEP) are compositionally biased toward polar residues. 2 positions are modified to phosphothreonine: threonine 1115 and threonine 1135. A UBR-type zinc finger spans residues 1177–1245 (DTCSFTWTGA…EKCKCKTLIA (69 aa)). Zn(2+) contacts are provided by cysteine 1179, cysteine 1196, cysteine 1199, cysteine 1208, cysteine 1211, cysteine 1215, histidine 1216, and histidine 1219. Serine 1227 carries the post-translational modification Phosphoserine. The Zn(2+) site is built by cysteine 1232, cysteine 1234, and cysteine 1240. The interval 1299–1318 (REDRNRKTASPEDSDMPDHD) is disordered. Serine 1308, serine 1355, serine 1375, and serine 1481 each carry phosphoserine. The interval 1515–1740 (SVEPLPPRPS…PSSTSTPAAS (226 aa)) is disordered. A compositionally biased stretch (low complexity) spans 1524-1537 (SSDQSSSSSQSQSS). Residues 1538 to 1553 (YIIRNPQQRRISQSQP) show a composition bias toward polar residues. Serine 1549 is modified (phosphoserine). Acidic residues-rich tracts occupy residues 1559–1574 (EEQD…EVEV) and 1605–1614 (HDEDGSDMEL). The segment covering 1629–1638 (NHSNQDNASG) has biased composition (polar residues). 3 stretches are compositionally biased toward low complexity: residues 1641–1657 (SVVT…ASSV), 1668–1681 (SNDS…SSQS), and 1726–1740 (AAST…PAAS). Threonine 1736 bears the Phosphothreonine mark. Phosphoserine is present on serine 1741. Tyrosine 1746 is subject to Phosphotyrosine. At serine 1780 the chain carries Phosphoserine. The interval 1859-1890 (LASAGDPGHPNHPLHASQNSARRERMTAREEA) is disordered. Basic and acidic residues predominate over residues 1879-1890 (ARRERMTAREEA). Threonine 1969 is subject to Phosphothreonine. The tract at residues 1984 to 2021 (GIDNEDSEHENDDDTNQSATLNDKDDDSLPAETGQNHP) is disordered. Acidic residues predominate over residues 1985 to 1998 (IDNEDSEHENDDDT). Serine 1990, serine 2026, and serine 2028 each carry phosphoserine. Threonine 2030 is modified (phosphothreonine). Serine 2076 carries the phosphoserine modification. The interval 2117–2142 (RQKKEGEEQPVLPEETESSKPGPSAH) is disordered. Position 2213 is a phosphothreonine (threonine 2213). Phosphoserine is present on residues serine 2241 and serine 2289. Residues 2323–2392 (HTSLMQRLRN…PSDDPEPLPA (70 aa)) form a disordered region. Basic and acidic residues-rich tracts occupy residues 2332 to 2348 (NRGE…EMRR) and 2356 to 2368 (SRRD…RRQL). The PABC domain occupies 2377-2454 (PASEGNPSDD…AMELIIAHGR (78 aa)). Positions 2462-2799 (LDLGLVDSSE…AIKTKNFGFV (338 aa)) constitute an HECT domain. Residues serine 2469, serine 2484, and serine 2486 each carry the phosphoserine modification. The interval 2473–2493 (VQQENRKRHGSSRSVVDMDLD) is disordered. The Glycyl thioester intermediate role is filled by cysteine 2768.

The protein belongs to the UBR5 family. Homotetramer; composed of a dimer of dimers. Associates with CDK9 and TFIIS/TCEA1 and forms a transcription regulatory complex made of CDK9, RNAP II, UBR5 and TFIIS/TCEA1 that can stimulate target gene transcription (e.g. gamma fibrinogen/FGG) by recruiting their promoters. Associates with the E3 ligase complex containing DYRK2, EDD/UBR5, DDB1 and DCAF1 proteins (EDVP complex). Binds TOPBP1. Interacts with PIH1D1. Interacts with CIB1. In terms of assembly, (Microbial infection) Interacts with human T-cell leukemia virus 1/HTLV-1 protein HBZ; this interaction modulates HBZ stability. In terms of tissue distribution, widely expressed. Most abundant in testis and expressed at high levels in brain, pituitary and kidney.

Its subcellular location is the nucleus. The protein resides in the cytoplasm. It carries out the reaction S-ubiquitinyl-[E2 ubiquitin-conjugating enzyme]-L-cysteine + [acceptor protein]-L-lysine = [E2 ubiquitin-conjugating enzyme]-L-cysteine + N(6)-ubiquitinyl-[acceptor protein]-L-lysine.. The protein operates within protein modification; protein ubiquitination. Functionally, E3 ubiquitin-protein ligase involved in different protein quality control pathways in the cytoplasm and nucleus. Mainly acts as a ubiquitin chain elongator that extends pre-ubiquitinated substrates. Component of the N-end rule pathway: ubiquitinates proteins bearing specific N-terminal residues that are destabilizing according to the N-end rule, leading to their degradation. Recognizes type-1 N-degrons, containing positively charged amino acids (Arg, Lys and His). Together with UBR4, part of a cytoplasm protein quality control pathway that prevents protein aggregation by catalyzing assembly of heterotypic 'Lys-11'-/'Lys-48'-linked branched ubiquitin chains on aggregated proteins, leading to substrate recognition by the segregase p97/VCP and degradation by the proteasome: UBR5 is probably branching multiple 'Lys-48'-linked chains of substrates initially modified with mixed conjugates by UBR4. Together with ITCH, catalyzes 'Lys-48'-/'Lys-63'-branched ubiquitination of TXNIP, leading to its degradation: UBR5 mediates branching of 'Lys-48'-linked chains of substrates initially modified with 'Lys-63'-linked conjugates by ITCH. Catalytic component of a nuclear protein quality control pathway that mediates ubiquitination and degradation of unpaired transcription factors (i.e. transcription factors that are not assembled into functional multiprotein complexes): specifically recognizes and binds degrons that are not accessible when transcription regulators are associated with their coactivators. Ubiquitinates various unpaired transcription regulator (MYC, SUPT4H1, SUPT5H, CDC20 and MCRS1), as well as ligand-bound nuclear receptors (ESR1, NR1H3, NR3C1, PGR, RARA, RXRA AND VDR) that are not associated with their nuclear receptor coactivators (NCOAs). Involved in maturation and/or transcriptional regulation of mRNA by mediating polyubiquitination and activation of CDK9. Also acts as a regulator of DNA damage response by acting as a suppressor of RNF168, an E3 ubiquitin-protein ligase that promotes accumulation of 'Lys-63'-linked histone H2A and H2AX at DNA damage sites, thereby acting as a guard against excessive spreading of ubiquitinated chromatin at damaged chromosomes. Regulates DNA topoisomerase II binding protein (TopBP1) in the DNA damage response. Ubiquitinates acetylated PCK1. Acts as a positive regulator of the canonical Wnt signaling pathway by mediating (1) ubiquitination and stabilization of CTNNB1, and (2) 'Lys-48'-linked ubiquitination and degradation of TLE3. Promotes disassembly of the mitotic checkpoint complex (MCC) from the APC/C complex by catalyzing ubiquitination of BUB1B, BUB3 and CDC20. Plays an essential role in extraembryonic development. Required for the maintenance of skeletal tissue homeostasis by acting as an inhibitor of hedgehog (HH) signaling. The polypeptide is E3 ubiquitin-protein ligase UBR5 (UBR5) (Homo sapiens (Human)).